We begin with the raw amino-acid sequence, 390 residues long: GTPase Obg (390 aa).

The 159-residue stretch at 1–159 (MKFVDEAAIL…RELMLELLLL (159 aa)) folds into the Obg domain. The region spanning 160-333 (ADVGMLGLPN…LCWDVMSFLN (174 aa)) is the OBG-type G domain. GTP contacts are provided by residues 166–173 (GLPNAGKS), 191–195 (FTTLI), 213–216 (DIPG), 283–286 (NKID), and 314–316 (SAA). The Mg(2+) site is built by Ser-173 and Thr-193. Positions 364 to 384 (VEAEAEDDWDDDWDEEDDDGV) are enriched in acidic residues. The disordered stretch occupies residues 364–390 (VEAEAEDDWDDDWDEEDDDGVEIIYER).

The protein belongs to the TRAFAC class OBG-HflX-like GTPase superfamily. OBG GTPase family. Monomer. The cofactor is Mg(2+).

It is found in the cytoplasm. Its function is as follows. An essential GTPase which binds GTP, GDP and possibly (p)ppGpp with moderate affinity, with high nucleotide exchange rates and a fairly low GTP hydrolysis rate. Plays a role in control of the cell cycle, stress response, ribosome biogenesis and in those bacteria that undergo differentiation, in morphogenesis control. The polypeptide is GTPase Obg (Yersinia pestis).